Here is a 340-residue protein sequence, read N- to C-terminus: Putative D-lactate dehydrogenase (340 aa).

NAD(+)-binding positions include 153 to 154, aspartate 174, 206 to 207, 233 to 235, and aspartate 259; these read NI, TP, and VSR. Residue arginine 235 is part of the active site. Residue glutamate 264 is part of the active site. Histidine 296 (proton donor) is an active-site residue.

Belongs to the D-isomer specific 2-hydroxyacid dehydrogenase family.

It carries out the reaction (R)-lactate + NAD(+) = pyruvate + NADH + H(+). This chain is Putative D-lactate dehydrogenase (ldhA), found in Dictyostelium discoideum (Social amoeba).